The following is a 119-amino-acid chain: Large ribosomal subunit protein uL18 (119 aa).

The disordered stretch occupies residues 1–25 (MITKIDKNKVRKKRHARVRSKISGT). Over residues 9 to 20 (KVRKKRHARVRS) the composition is skewed to basic residues.

This sequence belongs to the universal ribosomal protein uL18 family. In terms of assembly, part of the 50S ribosomal subunit; part of the 5S rRNA/L5/L18/L25 subcomplex. Contacts the 5S and 23S rRNAs.

Its function is as follows. This is one of the proteins that bind and probably mediate the attachment of the 5S RNA into the large ribosomal subunit, where it forms part of the central protuberance. In Listeria monocytogenes serotype 4b (strain CLIP80459), this protein is Large ribosomal subunit protein uL18.